Consider the following 206-residue polypeptide: Probable N-acetyltransferase 14 (206 aa).

Residues 55 to 206 (LRFVLASFAL…TLVREFSKEL (152 aa)) enclose the N-acetyltransferase domain. A helical transmembrane segment spans residues 57–77 (FVLASFALALLLPVFLAVAAM).

This sequence belongs to the camello family.

Its subcellular location is the membrane. Functionally, probable acetyltransferase. In terms of biological role, may act as a transcription factor regulating the expression of coproporphyrinogen oxidase by binding to a promoter regulatory element. This is Probable N-acetyltransferase 14 from Bos taurus (Bovine).